The following is a 441-amino-acid chain: 5-hydroxytryptamine receptor 3B (441 aa).

Positions 1–21 are cleaved as a signal peptide; it reads MLSSVMAPLWACILVAAGILA. The Extracellular portion of the chain corresponds to 22–238; sequence TDTHHPQDSA…IQFNVVMRRH (217 aa). N-linked (GlcNAc...) asparagine glycans are attached at residues asparagine 52, asparagine 96, asparagine 138, asparagine 168, and asparagine 203. Residues cysteine 155 and cysteine 169 are joined by a disulfide bond. A helical membrane pass occupies residues 239-259; sequence PLVYVVSLLIPSIFLMLVDLG. Residues 260-268 lie on the Cytoplasmic side of the membrane; it reads SFYLPPNCR. The chain crosses the membrane as a helical span at residues 269 to 286; that stretch reads ARIVFKTSVLVGYTVFRV. N-linked (GlcNAc...) asparagine glycosylation occurs at asparagine 287. At 287 to 303 the chain is on the extracellular side; that stretch reads NMSNQVPRSVGSTPLIG. A helical transmembrane segment spans residues 304–324; the sequence is HFFTICMAFLVLSLAKSIVLV. Over 325-414 the chain is Cytoplasmic; sequence KFLHDEQRGG…WLVLLSRFDR (90 aa). The interval 381–413 is HA-stretch; determines single-channel conductance in 5-HT3 receptors; sequence VWSQLQSISNYLQTQDQTDQQEAEWLVLLSRFD. Residues 415–435 traverse the membrane as a helical segment; it reads LLFQSYLFMLGIYTITLCSLW. Topologically, residues 436 to 441 are extracellular; that stretch reads ALWGGV.

The protein belongs to the ligand-gated ion channel (TC 1.A.9) family. 5-hydroxytryptamine receptor (TC 1.A.9.2) subfamily. HTR3B sub-subfamily. As to quaternary structure, forms homopentameric as well as heteropentameric serotonin-activated cation-selective channel complexes with HTR3A. The homomeric complex is not functional. Heteropentameric complexes display properties which resemble that of neuronal serotonin-activated channels in vivo. In terms of processing, N-glycosylation required for membrane localization. Expressed in the brain cortex, in the caudate nucleus, the hippocampus, the thalamus and the amygdala. Detected in the kidney and testis as well as in monocytes of the spleen, small and large intestine, uterus, prostate, ovary and placenta.

Its subcellular location is the postsynaptic cell membrane. The protein localises to the cell membrane. The enzyme catalyses Na(+)(in) = Na(+)(out). It catalyses the reaction K(+)(in) = K(+)(out). It carries out the reaction Ca(2+)(in) = Ca(2+)(out). Its function is as follows. Forms serotonin (5-hydroxytryptamine/5-HT3)-activated cation-selective channel complexes, which when activated cause fast, depolarizing responses in neurons. This chain is 5-hydroxytryptamine receptor 3B, found in Homo sapiens (Human).